The sequence spans 87 residues: Small ribosomal subunit protein uS17 (87 aa).

This sequence belongs to the universal ribosomal protein uS17 family. As to quaternary structure, part of the 30S ribosomal subunit.

One of the primary rRNA binding proteins, it binds specifically to the 5'-end of 16S ribosomal RNA. The chain is Small ribosomal subunit protein uS17 from Endomicrobium trichonymphae.